A 25-amino-acid polypeptide reads, in one-letter code: LKCYSSRTETMTCPEGKDKCEKYAV.

C3 and C20 are joined by a disulfide.

This sequence belongs to the three-finger toxin family. Short-chain subfamily. As to expression, expressed by the venom gland.

The protein localises to the secreted. Functionally, binds and may inhibit nicotinic acetylcholine receptors (nAChR). The chain is Nicotinic acetylcholine receptor-binding protein Mnn-4 from Micrurus nigrocinctus (Central American coral snake).